A 202-amino-acid chain; its full sequence is MCYGKCARCIGHSLVGLALLCIAANILLYFPNGETKYASENHLSRFVWFFSGIVGGGLLMLLPAFVFIGLEQDDCCGCCGHENCGKRCAMLSSVLAALIGIAGSGYCVIVAALGLAEGPLCLDSLGQWNYTFASTEGQYLLDTSTWSECTEPKHIVEWNVSLFSILLALGGIEFILCLIQVINGVLGGICGFCCSHQQQYDC.

The Cytoplasmic segment spans residues 1–9 (MCYGKCARC). Residues 10 to 30 (IGHSLVGLALLCIAANILLYF) traverse the membrane as a helical segment. The Extracellular segment spans residues 31-49 (PNGETKYASENHLSRFVWF). Residues 50 to 70 (FSGIVGGGLLMLLPAFVFIGL) form a helical membrane-spanning segment. Residues 71–93 (EQDDCCGCCGHENCGKRCAMLSS) are Cytoplasmic-facing. A helical transmembrane segment spans residues 94–114 (VLAALIGIAGSGYCVIVAALG). The Extracellular portion of the chain corresponds to 115 to 161 (LAEGPLCLDSLGQWNYTFASTEGQYLLDTSTWSECTEPKHIVEWNVS). Asparagine 129 and asparagine 159 each carry an N-linked (GlcNAc...) asparagine glycan. The chain crosses the membrane as a helical span at residues 162–182 (LFSILLALGGIEFILCLIQVI). Topologically, residues 183–202 (NGVLGGICGFCCSHQQQYDC) are cytoplasmic.

It belongs to the L6 tetraspanin family. Present in high molecular weight complexes in tumor cells. Interacts with SDCBP2. Highly expressed in lung, breast, colon and ovarian carcinomas. It is also present on some normal cells, endothelial cells in particular.

It localises to the membrane. This Homo sapiens (Human) protein is Transmembrane 4 L6 family member 1 (TM4SF1).